We begin with the raw amino-acid sequence, 220 residues long: Deoxyribose-phosphate aldolase (220 aa).

Asp89 (proton donor/acceptor) is an active-site residue. Lys151 acts as the Schiff-base intermediate with acetaldehyde in catalysis. Lys180 functions as the Proton donor/acceptor in the catalytic mechanism.

It belongs to the DeoC/FbaB aldolase family. DeoC type 1 subfamily.

It is found in the cytoplasm. It carries out the reaction 2-deoxy-D-ribose 5-phosphate = D-glyceraldehyde 3-phosphate + acetaldehyde. It participates in carbohydrate degradation; 2-deoxy-D-ribose 1-phosphate degradation; D-glyceraldehyde 3-phosphate and acetaldehyde from 2-deoxy-alpha-D-ribose 1-phosphate: step 2/2. Functionally, catalyzes a reversible aldol reaction between acetaldehyde and D-glyceraldehyde 3-phosphate to generate 2-deoxy-D-ribose 5-phosphate. The chain is Deoxyribose-phosphate aldolase from Streptococcus pneumoniae (strain Hungary19A-6).